A 245-amino-acid chain; its full sequence is Ribonuclease PH (245 aa).

Residues Arg-86 and 124 to 126 (GTR) contribute to the phosphate site.

This sequence belongs to the RNase PH family. As to quaternary structure, homohexameric ring arranged as a trimer of dimers. It has been suggested that the active form is the dimer which binds tRNA and that the hexameric form protects the substrate recognition loop (approximately residues 65-82) from proteolysis.

The catalysed reaction is tRNA(n+1) + phosphate = tRNA(n) + a ribonucleoside 5'-diphosphate. Functionally, phosphorolytic 3'-5' exoribonuclease that plays an important role in tRNA 3'-end maturation. Removes nucleotide residues following the 3'-CCA terminus of tRNAs; can also add nucleotides to the ends of RNA molecules by using nucleoside diphosphates as substrates, but this may not be physiologically important. Probably plays a role in initiation of 16S rRNA degradation (leading to ribosome degradation) during starvation. Plays a role in the secondary pathway of 23S rRNA 3' end maturation. The sequence is that of Ribonuclease PH from Bacillus subtilis (strain 168).